Here is a 530-residue protein sequence, read N- to C-terminus: UPF0422 protein lpl2888 (530 aa).

Residues 1–19 (MKFKKIILALACLSSPLYA) form the signal peptide. Positions 20-66 (DQDQQLKSEIQRLQHQAEDLQAQLNRLQKQLANHKSSQQKHEQQAAT) form a coiled coil. The segment at 50 to 81 (LANHKSSQQKHEQQAATKPAEPQSKPTVKSGA) is disordered.

Belongs to the UPF0422 family.

This chain is UPF0422 protein lpl2888, found in Legionella pneumophila (strain Lens).